The chain runs to 852 residues: Bifunctional uridylyltransferase/uridylyl-removing enzyme (852 aa).

The uridylyltransferase stretch occupies residues 1-318 (MPANLSSALE…SAPMRVTLRI (318 aa)). Residues 319–672 (DDDYIQVNNQ…SRILFKSDSF (354 aa)) are uridylyl-removing. Residues 436–558 (VDDHILTVVR…VQTHERLSAL (123 aa)) form the HD domain. 2 ACT domains span residues 673-757 (QVMV…SHSR) and 785-852 (SVEI…EQLS).

It belongs to the GlnD family. Mg(2+) is required as a cofactor.

It catalyses the reaction [protein-PII]-L-tyrosine + UTP = [protein-PII]-uridylyl-L-tyrosine + diphosphate. The catalysed reaction is [protein-PII]-uridylyl-L-tyrosine + H2O = [protein-PII]-L-tyrosine + UMP + H(+). Uridylyltransferase (UTase) activity is inhibited by glutamine, while glutamine activates uridylyl-removing (UR) activity. Functionally, modifies, by uridylylation and deuridylylation, the PII regulatory proteins (GlnB and homologs), in response to the nitrogen status of the cell that GlnD senses through the glutamine level. Under low glutamine levels, catalyzes the conversion of the PII proteins and UTP to PII-UMP and PPi, while under higher glutamine levels, GlnD hydrolyzes PII-UMP to PII and UMP (deuridylylation). Thus, controls uridylylation state and activity of the PII proteins, and plays an important role in the regulation of nitrogen assimilation and metabolism. The sequence is that of Bifunctional uridylyltransferase/uridylyl-removing enzyme from Neisseria meningitidis serogroup A / serotype 4A (strain DSM 15465 / Z2491).